A 319-amino-acid chain; its full sequence is Ribose-phosphate pyrophosphokinase (319 aa).

Residues 40-42 (DGE) and 99-100 (RQ) each bind ATP. Mg(2+)-binding residues include His134 and Asp174. Lys198 is an active-site residue. D-ribose 5-phosphate contacts are provided by residues Arg200, Asp224, and 228–232 (DTAGT).

It belongs to the ribose-phosphate pyrophosphokinase family. Class I subfamily. In terms of assembly, homohexamer. The cofactor is Mg(2+).

The protein localises to the cytoplasm. It carries out the reaction D-ribose 5-phosphate + ATP = 5-phospho-alpha-D-ribose 1-diphosphate + AMP + H(+). It functions in the pathway metabolic intermediate biosynthesis; 5-phospho-alpha-D-ribose 1-diphosphate biosynthesis; 5-phospho-alpha-D-ribose 1-diphosphate from D-ribose 5-phosphate (route I): step 1/1. Its function is as follows. Involved in the biosynthesis of the central metabolite phospho-alpha-D-ribosyl-1-pyrophosphate (PRPP) via the transfer of pyrophosphoryl group from ATP to 1-hydroxyl of ribose-5-phosphate (Rib-5-P). This is Ribose-phosphate pyrophosphokinase from Xanthomonas campestris pv. campestris (strain ATCC 33913 / DSM 3586 / NCPPB 528 / LMG 568 / P 25).